Here is a 25-residue protein sequence, read N- to C-terminus: ATP-dependent 6-phosphofructokinase 2 (25 aa).

G11 lines the ATP pocket.

The protein belongs to the phosphofructokinase type A (PFKA) family. ATP-dependent PFK group I subfamily. Prokaryotic clade 'B1' sub-subfamily. Homotetramer. The cofactor is Mg(2+).

It localises to the cytoplasm. It catalyses the reaction beta-D-fructose 6-phosphate + ATP = beta-D-fructose 1,6-bisphosphate + ADP + H(+). Its pathway is carbohydrate degradation; glycolysis; D-glyceraldehyde 3-phosphate and glycerone phosphate from D-glucose: step 3/4. With respect to regulation, in contrast with PFK1 this enzyme is not affected by phosphoenolpyruvate. Catalyzes the phosphorylation of D-fructose 6-phosphate to fructose 1,6-bisphosphate by ATP, the first committing step of glycolysis. The sequence is that of ATP-dependent 6-phosphofructokinase 2 (pfkA2) from Thermus thermophilus (strain ATCC 27634 / DSM 579 / HB8).